We begin with the raw amino-acid sequence, 52 residues long: Transcriptional regulator SlrA (52 aa).

The Sin domain occupies 1–38; sequence MKTHVKKDLDKGWHMLIQEARSIGLGIHDVRQFLESET.

As to quaternary structure, component of the SlrR/SlrA complex.

Its function is as follows. Required specifically for induction of eps and yqxM operons by antagonizing SinR. Regulates SlrR activity. Controls the initiation of biofilm formation. The chain is Transcriptional regulator SlrA (slrA) from Bacillus subtilis (strain 168).